A 443-amino-acid polypeptide reads, in one-letter code: Probable D-serine dehydratase (443 aa).

Lys118 carries the post-translational modification N6-(pyridoxal phosphate)lysine.

The protein belongs to the serine/threonine dehydratase family. DsdA subfamily. The cofactor is pyridoxal 5'-phosphate.

The enzyme catalyses D-serine = pyruvate + NH4(+). The polypeptide is Probable D-serine dehydratase (Vibrio campbellii (strain ATCC BAA-1116)).